Here is a 464-residue protein sequence, read N- to C-terminus: Trigger factor (464 aa).

One can recognise a PPIase FKBP-type domain in the interval 169-256; the sequence is GDVAIVDYRG…MKELKAKELP (88 aa).

Belongs to the FKBP-type PPIase family. Tig subfamily.

Its subcellular location is the cytoplasm. The catalysed reaction is [protein]-peptidylproline (omega=180) = [protein]-peptidylproline (omega=0). Its function is as follows. Involved in protein export. Acts as a chaperone by maintaining the newly synthesized protein in an open conformation. Functions as a peptidyl-prolyl cis-trans isomerase. The sequence is that of Trigger factor from Microcystis aeruginosa (strain NIES-843 / IAM M-2473).